Reading from the N-terminus, the 339-residue chain is Serpentine receptor class alpha-21 (339 aa).

5 helical membrane-spanning segments follow: residues 30–50, 150–170, 199–219, 250–270, and 282–302; these read FNFL…WLAI, FIAV…FYIA, VRTV…YLSV, ILIV…NLLL, and VLVA…PLVI.

It belongs to the nematode receptor-like protein sra family.

The protein resides in the membrane. This Caenorhabditis elegans protein is Serpentine receptor class alpha-21 (sra-21).